The primary structure comprises 102 residues: Putative toxin YafQ (102 aa).

The protein belongs to the RelE toxin family. YafQ subfamily.

In terms of biological role, toxic component of a type II toxin-antitoxin (TA) system. Its cognate antitoxin is RelB. This is Putative toxin YafQ from Haemophilus influenzae (strain ATCC 51907 / DSM 11121 / KW20 / Rd).